The primary structure comprises 1328 residues: Protein turtle homolog B (1328 aa).

The signal sequence occupies residues M1–G17. Residues L18–P722 lie on the Extracellular side of the membrane. 5 Ig-like domains span residues P30–V115, P139–Q226, P228–T320, P324–V415, and P420–T504. Intrachain disulfides connect C45-C113 and C161-C208. N-linked (GlcNAc...) asparagine glycosylation is found at N241 and N258. Cystine bridges form between C250–C303, C346–C397, and C442–C488. 2 consecutive Fibronectin type-III domains span residues A512 to F604 and L614 to I708. A glycan (N-linked (GlcNAc...) asparagine) is linked at N624. A helical membrane pass occupies residues V723–L743. The Cytoplasmic segment spans residues A744–G1328. 3 disordered regions span residues R758–L817, P914–W1040, and K1106–G1328. A phosphoserine mark is found at S775, S783, and S794. Residues S990–L1001 show a composition bias toward low complexity. 3 stretches are compositionally biased toward polar residues: residues E1018–G1033, L1129–G1141, and S1199–G1214. At R1136 the chain carries Omega-N-methylarginine. 2 positions are modified to phosphoserine: S1207 and S1215. Positions S1246–T1273 are enriched in low complexity. 2 stretches are compositionally biased toward pro residues: residues P1284–P1295 and P1318–G1328.

It belongs to the immunoglobulin superfamily. Turtle family. Found in a complex with MAGI2 and NLGN2, where it interacts with MAGI2 (via PDZ 5 and PDZ 6 domains). N-glycosylated and sialylated. Not significantly O-glycosylated. As to expression, detected in brain.

Its subcellular location is the cell membrane. It is found in the postsynaptic cell membrane. The protein resides in the postsynaptic density. Transmembrane protein which is abundantly expressed in interneurons, where it may regulate inhibitory synapse development. May mediate homophilic cell adhesion. This is Protein turtle homolog B from Mus musculus (Mouse).